We begin with the raw amino-acid sequence, 466 residues long: 3-isopropylmalate dehydratase large subunit (466 aa).

[4Fe-4S] cluster is bound by residues cysteine 347, cysteine 407, and cysteine 410.

The protein belongs to the aconitase/IPM isomerase family. LeuC type 1 subfamily. Heterodimer of LeuC and LeuD. [4Fe-4S] cluster is required as a cofactor.

The catalysed reaction is (2R,3S)-3-isopropylmalate = (2S)-2-isopropylmalate. It functions in the pathway amino-acid biosynthesis; L-leucine biosynthesis; L-leucine from 3-methyl-2-oxobutanoate: step 2/4. In terms of biological role, catalyzes the isomerization between 2-isopropylmalate and 3-isopropylmalate, via the formation of 2-isopropylmaleate. The protein is 3-isopropylmalate dehydratase large subunit of Shigella flexneri.